Here is a 401-residue protein sequence, read N- to C-terminus: Proline-rich protein 30 (401 aa).

Positions 69–80 are enriched in polar residues; sequence PGPHFSSDSNSD. 3 disordered regions span residues 69 to 93, 129 to 191, and 357 to 401; these read PGPHFSSDSNSDFVPPHSSSHPRSS, SSSL…RGAG, and QSPK…KSPS. 2 stretches are compositionally biased toward low complexity: residues 83–93 and 129–147; these read PPHSSSHPRSS and SSSLSQLQHSSPHSCQSPS. Composition is skewed to polar residues over residues 148-186 and 357-368; these read RLQDLQSPKITSPVPSSPSPRIQNNKQTWQWPQSGSIKS and QSPKPSQCSRSL.

This is Proline-rich protein 30 (Prr30) from Mus musculus (Mouse).